A 319-amino-acid polypeptide reads, in one-letter code: Beta-ketoacyl-[acyl-carrier-protein] synthase III (319 aa).

Residues cysteine 110 and histidine 246 contribute to the active site. The tract at residues 247-251 (QANYR) is ACP-binding. Asparagine 276 is a catalytic residue.

This sequence belongs to the thiolase-like superfamily. FabH family. As to quaternary structure, homodimer.

The protein localises to the cytoplasm. The catalysed reaction is malonyl-[ACP] + acetyl-CoA + H(+) = 3-oxobutanoyl-[ACP] + CO2 + CoA. The protein operates within lipid metabolism; fatty acid biosynthesis. Its function is as follows. Catalyzes the condensation reaction of fatty acid synthesis by the addition to an acyl acceptor of two carbons from malonyl-ACP. Catalyzes the first condensation reaction which initiates fatty acid synthesis and may therefore play a role in governing the total rate of fatty acid production. Possesses both acetoacetyl-ACP synthase and acetyl transacylase activities. Its substrate specificity determines the biosynthesis of branched-chain and/or straight-chain of fatty acids. The sequence is that of Beta-ketoacyl-[acyl-carrier-protein] synthase III from Lactobacillus delbrueckii subsp. bulgaricus (strain ATCC 11842 / DSM 20081 / BCRC 10696 / JCM 1002 / NBRC 13953 / NCIMB 11778 / NCTC 12712 / WDCM 00102 / Lb 14).